Reading from the N-terminus, the 567-residue chain is Urease subunit alpha (567 aa).

One can recognise a Urease domain in the interval 129–567 (GGIDSHIHFI…LPLAQRYFLF (439 aa)). Residues His-134, His-136, and Lys-217 each contribute to the Ni(2+) site. N6-carboxylysine is present on Lys-217. Substrate is bound at residue His-219. His-246 and His-272 together coordinate Ni(2+). Catalysis depends on His-320, which acts as the Proton donor. Residue Asp-360 coordinates Ni(2+).

This sequence belongs to the metallo-dependent hydrolases superfamily. Urease alpha subunit family. Heterotrimer of UreA (gamma), UreB (beta) and UreC (alpha) subunits. Three heterotrimers associate to form the active enzyme. Requires Ni cation as cofactor. In terms of processing, carboxylation allows a single lysine to coordinate two nickel ions.

The protein localises to the cytoplasm. It catalyses the reaction urea + 2 H2O + H(+) = hydrogencarbonate + 2 NH4(+). It participates in nitrogen metabolism; urea degradation; CO(2) and NH(3) from urea (urease route): step 1/1. This chain is Urease subunit alpha, found in Pseudomonas putida (strain W619).